A 311-amino-acid chain; its full sequence is Ribose-5-phosphate isomerase (311 aa).

Gly residues predominate over residues 22–32 (AGGAASGGGGN). Residues 22–67 (AGGAASGGGGNSWDLPGSHVRLPGRAQSGTRGGAGNTSTSCGDSNS) form a disordered region. Arg-52 is subject to Omega-N-methylarginine. The segment covering 57–67 (NTSTSCGDSNS) has biased composition (polar residues). Ser-106 is modified (phosphoserine).

It belongs to the ribose 5-phosphate isomerase family.

The catalysed reaction is aldehydo-D-ribose 5-phosphate = D-ribulose 5-phosphate. It functions in the pathway carbohydrate degradation; pentose phosphate pathway; D-ribose 5-phosphate from D-ribulose 5-phosphate (non-oxidative stage): step 1/1. Functionally, catalyzes the reversible conversion of ribose-5-phosphate to ribulose 5-phosphate and participates in the first step of the non-oxidative branch of the pentose phosphate pathway. The polypeptide is Ribose-5-phosphate isomerase (Homo sapiens (Human)).